A 155-amino-acid polypeptide reads, in one-letter code: Ribosome maturation factor RimP (155 aa).

The protein belongs to the RimP family.

It localises to the cytoplasm. Required for maturation of 30S ribosomal subunits. The protein is Ribosome maturation factor RimP of Parabacteroides distasonis (strain ATCC 8503 / DSM 20701 / CIP 104284 / JCM 5825 / NCTC 11152).